The sequence spans 392 residues: MANKRNEDIELGPAEGRGSTDKDPFLARRSSSQPNRPQQAGPFGGYFDKIDHSPGASIIAYCLSSISMTVVNKYVVSGSEWNLNFFYLAVQSLVCTAAILICKQLGMFQNLAAFDSTKAKKWFPISLLLVGMIYTSTKALQFLSVPVYTIFKNLTIIVVAYGEVLWFGGSVTPMALLSFGLMVLSSVIAAWADIQAAVEGVGHTAEATDAISTLNAGYAWMGMNVFCTAAYLLGMRKVIKKMNFKDYDTMFYNNLLTIPVLIVFSLLFEDWSNDNLIKNFPVETRNSLFIGMIYSGLAAIFISYCSAWCIRVTSSTTYSMVGALNKLPLAISGLIFFDAPVTFGSVTAIFVGFVSGLVYTWSKTRQKVSQILPTTQPTMSASAASNRDAANA.

The interval 1–40 (MANKRNEDIELGPAEGRGSTDKDPFLARRSSSQPNRPQQA) is disordered. Topologically, residues 1–55 (MANKRNEDIELGPAEGRGSTDKDPFLARRSSSQPNRPQQAGPFGGYFDKIDHSPG) are cytoplasmic. Polar residues predominate over residues 29 to 38 (RSSSQPNRPQ). A helical membrane pass occupies residues 56-76 (ASIIAYCLSSISMTVVNKYVV). Over 77 to 80 (SGSE) the chain is Lumenal. The helical transmembrane segment at 81 to 101 (WNLNFFYLAVQSLVCTAAILI) threads the bilayer. Over 102–121 (CKQLGMFQNLAAFDSTKAKK) the chain is Cytoplasmic. A helical transmembrane segment spans residues 122 to 144 (WFPISLLLVGMIYTSTKALQFLS). The Lumenal portion of the chain corresponds to 145 to 149 (VPVYT). Residues 150–168 (IFKNLTIIVVAYGEVLWFG) traverse the membrane as a helical segment. Residues 169–174 (GSVTPM) are Cytoplasmic-facing. Residues 175–198 (ALLSFGLMVLSSVIAAWADIQAAV) traverse the membrane as a helical segment. At 199–213 (EGVGHTAEATDAIST) the chain is on the lumenal side. The chain crosses the membrane as a helical span at residues 214-234 (LNAGYAWMGMNVFCTAAYLLG). At 235 to 248 (MRKVIKKMNFKDYD) the chain is on the cytoplasmic side. The helical transmembrane segment at 249 to 269 (TMFYNNLLTIPVLIVFSLLFE) threads the bilayer. The Lumenal segment spans residues 270–287 (DWSNDNLIKNFPVETRNS). The chain crosses the membrane as a helical span at residues 288 to 308 (LFIGMIYSGLAAIFISYCSAW). The Cytoplasmic segment spans residues 309–316 (CIRVTSST). Residues 317–337 (TYSMVGALNKLPLAISGLIFF) form a helical membrane-spanning segment. Residues 338–342 (DAPVT) are Lumenal-facing. The chain crosses the membrane as a helical span at residues 343–361 (FGSVTAIFVGFVSGLVYTW). The Cytoplasmic portion of the chain corresponds to 362 to 392 (SKTRQKVSQILPTTQPTMSASAASNRDAANA).

Belongs to the TPT transporter family. SLC35D subfamily. As to quaternary structure, homooligomer.

The protein localises to the golgi apparatus membrane. The protein resides in the cytoplasmic vesicle membrane. It localises to the endoplasmic reticulum membrane. In terms of biological role, involved in the import of GDP-mannose from the cytoplasm into the Golgi lumen. The chain is GDP-mannose transporter (vrg-4) from Neurospora crassa (strain ATCC 24698 / 74-OR23-1A / CBS 708.71 / DSM 1257 / FGSC 987).